Here is a 912-residue protein sequence, read N- to C-terminus: Metabotropic glutamate receptor 4 (912 aa).

An N-terminal signal peptide occupies residues 1–32 (MSGKGGWAWWWARLPLCLLLSLYAPWVPSSLG). Topologically, residues 33 to 587 (KPKGHPHMNS…IVKLEWDSPW (555 aa)) are extracellular. A disulfide bridge connects residues C67 and C109. N98 carries an N-linked (GlcNAc...) asparagine glycan. L-glutamate is bound by residues S159, 180-182 (AST), and Y230. 7 cysteine pairs are disulfide-bonded: C249-C538, C372-C388, C428-C435, C520-C539, C524-C542, C545-C557, and C560-C573. N-linked (GlcNAc...) asparagine glycosylation occurs at N301. D312 provides a ligand contact to L-glutamate. L-glutamate is bound at residue K405. N-linked (GlcNAc...) asparagine glycosylation is found at N454 and N484. N-linked (GlcNAc...) asparagine glycosylation occurs at N569. Residues 588–610 (AVLPLFLAVVGIAATLFVVVTFV) form a helical membrane-spanning segment. The Cytoplasmic segment spans residues 611–624 (RYNDTPIVKASGRE). A helical transmembrane segment spans residues 625–645 (LSYVLLAGIFLCYATTFLMIA). The Extracellular portion of the chain corresponds to 646–656 (EPDLGTCSLRR). A helical membrane pass occupies residues 657–675 (IFLGLGMSISYAALLTKTN). The Cytoplasmic portion of the chain corresponds to 676–699 (RIYRIFEQGKRSVSAPRFISPASQ). Residues 700–720 (LAITFILISLQLLGICVWFVV) form a helical membrane-spanning segment. Residues 721–750 (DPSHSVVDFQDQRTLDPRFARGVLKCDISD) are Extracellular-facing. Residues 751 to 772 (LSLICLLGYSMLLMVTCTVYAI) traverse the membrane as a helical segment. The Cytoplasmic portion of the chain corresponds to 773–785 (KTRGVPETFNEAK). Residues 786 to 808 (PIGFTMYTTCIVWLAFIPIFFGT) traverse the membrane as a helical segment. The Extracellular portion of the chain corresponds to 809 to 821 (SQSADKLYIQTTT). Residues 822 to 847 (LTVSVSLSASVSLGMLYMPKVYIILF) form a helical membrane-spanning segment. The Cytoplasmic portion of the chain corresponds to 848 to 912 (HPEQNVPKRK…TYVTYTNHAI (65 aa)).

It belongs to the G-protein coupled receptor 3 family. In terms of assembly, interacts with PICK1. As to expression, is widely distributed in the CNS. Predominant expression is seen in the granule cells of the cerebellum.

Its subcellular location is the cell membrane. G-protein coupled receptor for glutamate. Ligand binding causes a conformation change that triggers signaling via guanine nucleotide-binding proteins (G proteins) and modulates the activity of down-stream effectors. Signaling inhibits adenylate cyclase activity. The chain is Metabotropic glutamate receptor 4 (Grm4) from Rattus norvegicus (Rat).